The sequence spans 43 residues: Protein PsbN (43 aa).

The chain crosses the membrane as a helical span at residues 5 to 27; the sequence is TLVAISISCLLVSFTGYALYTAF.

It belongs to the PsbN family.

The protein resides in the plastid. It localises to the chloroplast thylakoid membrane. May play a role in photosystem I and II biogenesis. The polypeptide is Protein PsbN (Cedrus deodara (Deodar cedar)).